The sequence spans 233 residues: Probable GTP-binding protein EngB (233 aa).

The EngB-type G domain maps to 21 to 228 (GLPEVALVGR…WRWIREHVQD (208 aa)). GTP contacts are provided by residues 29 to 36 (GRSNVGKS) and 56 to 60 (GRTQA). 2 residues coordinate Mg(2+): Ser-36 and Thr-58. The segment at 68-87 (PQGKPRPEGEPQPDKDAGRT) is disordered. Positions 72 to 85 (PRPEGEPQPDKDAG) are enriched in basic and acidic residues. Residues 107–110 (DMPG), 174–177 (TKAD), and 207–209 (FSA) contribute to the GTP site.

It belongs to the TRAFAC class TrmE-Era-EngA-EngB-Septin-like GTPase superfamily. EngB GTPase family. The cofactor is Mg(2+).

Functionally, necessary for normal cell division and for the maintenance of normal septation. The chain is Probable GTP-binding protein EngB from Symbiobacterium thermophilum (strain DSM 24528 / JCM 14929 / IAM 14863 / T).